Here is a 1465-residue protein sequence, read N- to C-terminus: DNA polymerase III PolC-type (1465 aa).

The Exonuclease domain occupies 427–583 (YVVFDVETTG…YDAEATGRLL (157 aa)).

This sequence belongs to the DNA polymerase type-C family. PolC subfamily.

The protein localises to the cytoplasm. It catalyses the reaction DNA(n) + a 2'-deoxyribonucleoside 5'-triphosphate = DNA(n+1) + diphosphate. In terms of biological role, required for replicative DNA synthesis. This DNA polymerase also exhibits 3' to 5' exonuclease activity. The polypeptide is DNA polymerase III PolC-type (Streptococcus pyogenes serotype M12 (strain MGAS2096)).